The primary structure comprises 297 residues: Ribonuclease H2 subunit A (297 aa).

One can recognise an RNase H type-2 domain in the interval 21–248 (PCVLGIDEAG…ASTIVEKRCV (228 aa)). The a divalent metal cation site is built by Asp-27, Glu-28, and Asp-138.

Belongs to the RNase HII family. Eukaryotic subfamily. Mn(2+) is required as a cofactor. Mg(2+) serves as cofactor.

It catalyses the reaction Endonucleolytic cleavage to 5'-phosphomonoester.. In terms of biological role, catalytic subunit of RNase HII, an endonuclease that specifically degrades the RNA of RNA:DNA hybrids. Participates in DNA replication, possibly by mediating the removal of lagging-strand Okazaki fragment RNA primers during DNA replication. Mediates the excision of single ribonucleotides from DNA:RNA duplexes. This is Ribonuclease H2 subunit A (rnh-2) from Caenorhabditis elegans.